A 194-amino-acid chain; its full sequence is Protein cholesin (194 aa).

The interval M1 to R83 is disordered. Phosphoserine is present on residues S23 and S59. The segment covering E61–R83 has biased composition (basic and acidic residues). Phosphoserine is present on residues S97 and S175.

Secreted from the instestine, secretion is induced by feeding and cholesterol absorption.

It is found in the secreted. In terms of biological role, hormone secreted from the intestine in response to cholesterol, where it acts to inhibit cholesterol synthesis in the liver and VLDL secretion,leading to a reduction in circulating cholesterol levels. Acts through binding to its receptor, GPR146. This is Protein cholesin from Homo sapiens (Human).